A 278-amino-acid chain; its full sequence is Indole-3-glycerol phosphate synthase (278 aa).

Belongs to the TrpC family.

The enzyme catalyses 1-(2-carboxyphenylamino)-1-deoxy-D-ribulose 5-phosphate + H(+) = (1S,2R)-1-C-(indol-3-yl)glycerol 3-phosphate + CO2 + H2O. It functions in the pathway amino-acid biosynthesis; L-tryptophan biosynthesis; L-tryptophan from chorismate: step 4/5. This chain is Indole-3-glycerol phosphate synthase, found in Stutzerimonas stutzeri (strain A1501) (Pseudomonas stutzeri).